A 297-amino-acid polypeptide reads, in one-letter code: ATP synthase gamma chain (297 aa).

This sequence belongs to the ATPase gamma chain family. In terms of assembly, F-type ATPases have 2 components, CF(1) - the catalytic core - and CF(0) - the membrane proton channel. CF(1) has five subunits: alpha(3), beta(3), gamma(1), delta(1), epsilon(1). CF(0) has three main subunits: a, b and c.

It localises to the cell membrane. Its function is as follows. Produces ATP from ADP in the presence of a proton gradient across the membrane. The gamma chain is believed to be important in regulating ATPase activity and the flow of protons through the CF(0) complex. The chain is ATP synthase gamma chain from Micrococcus luteus (strain ATCC 4698 / DSM 20030 / JCM 1464 / CCM 169 / CCUG 5858 / IAM 1056 / NBRC 3333 / NCIMB 9278 / NCTC 2665 / VKM Ac-2230) (Micrococcus lysodeikticus).